The sequence spans 567 residues: Phenylalanine ammonia-lyase (567 aa).

The Proton donor/acceptor role is filled by Tyr-78. A cross-link (5-imidazolinone (Ala-Gly)) is located at residues 167 to 169; that stretch reads ASG. Position 168 is a 2,3-didehydroalanine (Ser) (Ser-168). Asn-223, Gln-311, Arg-317, Asn-347, Lys-419, Glu-448, and Asn-451 together coordinate (E)-cinnamate.

It belongs to the PAL/histidase family. Homotetramer. In terms of processing, contains an active site 4-methylidene-imidazol-5-one (MIO), which is formed autocatalytically by cyclization and dehydration of residues Ala-Ser-Gly.

Its subcellular location is the cytoplasm. The enzyme catalyses L-phenylalanine = (E)-cinnamate + NH4(+). Its pathway is phenylpropanoid metabolism; trans-cinnamate biosynthesis; trans-cinnamate from L-phenylalanine: step 1/1. Functionally, catalyzes the non-oxidative deamination of L-phenylalanine to form trans-cinnamic acid, the first step in the phenylpropanoid pathway. The chain is Phenylalanine ammonia-lyase from Trichormus variabilis (strain ATCC 29413 / PCC 7937) (Anabaena variabilis).